The chain runs to 517 residues: Crotonobetaine/carnitine--CoA ligase (517 aa).

Belongs to the ATP-dependent AMP-binding enzyme family.

The enzyme catalyses 4-(trimethylamino)butanoate + ATP + CoA = 4-(trimethylamino)butanoyl-CoA + AMP + diphosphate. It carries out the reaction crotonobetaine + ATP + CoA = crotonobetainyl-CoA + AMP + diphosphate. The catalysed reaction is (R)-carnitine + ATP + CoA = (R)-carnitinyl-CoA + AMP + diphosphate. It functions in the pathway amine and polyamine metabolism; carnitine metabolism. Its function is as follows. Catalyzes the transfer of CoA to carnitine, generating the initial carnitinyl-CoA needed for the CaiB reaction cycle. Also has activity toward crotonobetaine and gamma-butyrobetaine. The protein is Crotonobetaine/carnitine--CoA ligase of Citrobacter koseri (strain ATCC BAA-895 / CDC 4225-83 / SGSC4696).